The following is a 326-amino-acid chain: MAASNGEKSLIVSFGEMLIDFVPTVSGVSLADAPGFIKAPGGAPANVAIAISRLGGRAAFVGKLGDDEFGHMLAGILKQNGVSAEGINFDTGARTALAFVTLRSDGEREFMFYRNPSADMLLRPDELNLDVIRSAKVFHYGSISLIVEPCRSAHLKAMEVAKEAGALLSYDPNLRLPLWPSKEEAQKQILSIWDKAEVIKVSDEELMFLTGSDKVDDETALSLWHSNLKLLLVTLGEKGCRYYTKSFRGSVDPFHVDAVDTTGAGDSFVGALLCKIVDDRAVLEDEARLREVLRLANACGAITTTKKGAIPALPTESEVQSLLKGN.

The protein belongs to the carbohydrate kinase PfkB family.

It carries out the reaction D-fructose + ATP = D-fructose 6-phosphate + ADP + H(+). It participates in glycan biosynthesis; starch biosynthesis. Functionally, may play an important role in maintaining the flux of carbon towards starch formation. The protein is Probable fructokinase-4 of Arabidopsis thaliana (Mouse-ear cress).